We begin with the raw amino-acid sequence, 435 residues long: Adenylosuccinate synthetase (435 aa).

Residues 17 to 23 and 45 to 47 contribute to the GTP site; these read GDEGKGK and GHT. Asp-18 serves as the catalytic Proton acceptor. Mg(2+)-binding residues include Asp-18 and Gly-45. IMP contacts are provided by residues 18–21, 43–46, Thr-135, Arg-149, Gln-230, Thr-245, and Arg-309; these read DEGK and NAGH. The active-site Proton donor is His-46. 305-311 provides a ligand contact to substrate; the sequence is TVSGRAR. GTP-binding positions include Arg-311, 337 to 339, and 419 to 421; these read LLD and SVG.

Belongs to the adenylosuccinate synthetase family. In terms of assembly, homodimer. Mg(2+) serves as cofactor.

The protein localises to the cytoplasm. It catalyses the reaction IMP + L-aspartate + GTP = N(6)-(1,2-dicarboxyethyl)-AMP + GDP + phosphate + 2 H(+). It functions in the pathway purine metabolism; AMP biosynthesis via de novo pathway; AMP from IMP: step 1/2. Functionally, plays an important role in the de novo pathway of purine nucleotide biosynthesis. Catalyzes the first committed step in the biosynthesis of AMP from IMP. The sequence is that of Adenylosuccinate synthetase from Spiroplasma citri.